The following is a 135-amino-acid chain: ATP synthase epsilon chain, chloroplastic (135 aa).

It belongs to the ATPase epsilon chain family. As to quaternary structure, F-type ATPases have 2 components, CF(1) - the catalytic core - and CF(0) - the membrane proton channel. CF(1) has five subunits: alpha(3), beta(3), gamma(1), delta(1), epsilon(1). CF(0) has three main subunits: a, b and c.

The protein localises to the plastid. The protein resides in the chloroplast thylakoid membrane. Its function is as follows. Produces ATP from ADP in the presence of a proton gradient across the membrane. In Stigeoclonium helveticum (Green alga), this protein is ATP synthase epsilon chain, chloroplastic.